The primary structure comprises 1759 residues: Collagen alpha-1(IV) chain (1759 aa).

Residues 1–20 (MSRLSLLGLTAAVVLLSSFC) form the signal peptide. A propeptide spans 21-194 (QDRIHVDAAA…PGNSGYPGLK (174 aa)) (N-terminal propeptide (7S domain)). 6 disordered regions span residues 51 to 245 (PGFG…GSYP), 269 to 415 (KGRD…GIDG), 548 to 596 (AGDP…PGLP), 618 to 650 (PAGIPGLKGDHGLPGLPGRPGSDGLPGYPGGPG), 666 to 720 (IDGK…RGIP), and 787 to 1522 (RGQQ…GTPG). Composition is skewed to low complexity over residues 104 to 116 (HPGLQGLDGLPGL), 140 to 153 (PPGQSGQNGNPGRP), and 278 to 293 (PGMLGLDGPPGYPGLK). The segment at 195–1530 (GAKGDPGPYG…PGYPGSPGGW (1336 aa)) is triple-helical region. 3 stretches are compositionally biased toward gly residues: residues 324–345 (GEQGLGGTPGYPGTKGGAGEPG), 360–370 (GPLGEGTGEAG), and 379–388 (GVQGGKGLPG). Composition is skewed to low complexity over residues 399-411 (RGPVGAPGAPGQP) and 574-595 (MPGAPGKPGSAGSDGLSGSPGL). The segment covering 833-848 (YPGPNGDAGAAGLPGP) has biased composition (low complexity). A compositionally biased stretch (gly residues) spans 904–913 (GQDGGPGYSG). 4 stretches are compositionally biased toward low complexity: residues 1037-1047 (YPGQPGDVGYP), 1219-1232 (ENGDNGNQGRDGQP), 1247-1271 (PGRDGQPGPVGPPGDDGYPGAPGQD), and 1281-1309 (QDGYPGLDGLPGAPGLNGEPGSPGQYGMP). Over residues 1310-1319 (GLPGGPGESG) the composition is skewed to gly residues. Residues 1341 to 1357 (LPGAPGVPGVEGVPGLE) show a composition bias toward low complexity. Positions 1410-1422 (PRGDDGFPGRDGL) are enriched in basic and acidic residues. Composition is skewed to low complexity over residues 1423–1437 (DGLPGRPGREGLPGP) and 1472–1482 (PPGKAGYPGAP). Positions 1495–1504 (GMPGHGGDQG) are enriched in gly residues. The 225-residue stretch at 1535–1759 (GFTFAKHSQT…SRCQVCLKNR (225 aa)) folds into the Collagen IV NC1 domain. Disulfide bonds link cysteine 1550-cysteine 1641, cysteine 1583-cysteine 1638, cysteine 1595-cysteine 1601, cysteine 1660-cysteine 1755, cysteine 1694-cysteine 1752, and cysteine 1706-cysteine 1712. An S-Lysyl-methionine sulfilimine (Met-Lys) (interchain with K-1741) cross-link involves residue methionine 1623. Lysine 1741 is covalently cross-linked (S-Lysyl-methionine sulfilimine (Lys-Met) (interchain with M-1623)).

This sequence belongs to the type IV collagen family. Trimers of two alpha 1(IV) and one alpha 2(IV) chain. Type IV collagen forms a mesh-like network linked through intermolecular interactions between 7S domains and between NC1 domains. Post-translationally, prolines at the third position of the tripeptide repeating unit (G-X-Y) are hydroxylated in some or all of the chains. In terms of processing, type IV collagens contain numerous cysteine residues which are involved in inter- and intramolecular disulfide bonding. 12 of these, located in the NC1 domain, are conserved in all known type IV collagens. The trimeric structure of the NC1 domains is stabilized by covalent bonds between Lys and Met residues.

The protein localises to the secreted. The protein resides in the extracellular space. Its subcellular location is the extracellular matrix. It is found in the basement membrane. In terms of biological role, collagen type IV is specific for basement membranes. Required to restrict presynaptic growth at the neuromuscular junctions (NMJ) in late larval stage and in adult motor neurons. May play a role in axon regeneration in embryos following injury in D-type motor neurons. The chain is Collagen alpha-1(IV) chain from Caenorhabditis elegans.